Consider the following 196-residue polypeptide: Pyridoxal 5'-phosphate synthase subunit PdxT (196 aa).

47–49 lines the L-glutamine pocket; that stretch reads GES. The active-site Nucleophile is C79. L-glutamine is bound by residues R106 and 134–135; that span reads IR. Active-site charge relay system residues include H170 and E172.

The protein belongs to the glutaminase PdxT/SNO family. In the presence of PdxS, forms a dodecamer of heterodimers. Only shows activity in the heterodimer.

It carries out the reaction aldehydo-D-ribose 5-phosphate + D-glyceraldehyde 3-phosphate + L-glutamine = pyridoxal 5'-phosphate + L-glutamate + phosphate + 3 H2O + H(+). It catalyses the reaction L-glutamine + H2O = L-glutamate + NH4(+). It participates in cofactor biosynthesis; pyridoxal 5'-phosphate biosynthesis. In terms of biological role, catalyzes the hydrolysis of glutamine to glutamate and ammonia as part of the biosynthesis of pyridoxal 5'-phosphate. The resulting ammonia molecule is channeled to the active site of PdxS. The sequence is that of Pyridoxal 5'-phosphate synthase subunit PdxT from Bacillus cereus (strain Q1).